Here is a 662-residue protein sequence, read N- to C-terminus: 72 kDa type IV collagenase (662 aa).

The N-terminal stretch at 1-29 (MEARVAWGALAGPLRVLCVLCCLLGRAIA) is a signal peptide. The propeptide at 30-109 (APSPIIKFPG…PRCGNPDVAN (80 aa)) is activation peptide. The Cysteine switch motif lies at 100–107 (PRCGNPDV). Zn(2+) is bound at residue C102. The interval 110 to 221 (YNFFPRKPKW…LWTLGEGQVV (112 aa)) is collagenase-like 1. The Ca(2+) site is built by D134 and D168. 2 residues coordinate Zn(2+): H178 and D180. Residues D185 and G186 each coordinate Ca(2+). H193 is a binding site for Zn(2+). Ca(2+) contacts are provided by G200, G202, and D204. Zn(2+) is bound at residue H206. Positions 208, 209, and 211 each coordinate Ca(2+). Residues 222 to 396 (RVKYGNADGE…WGFCPDQGYS (175 aa)) are collagen-binding. 3 consecutive Fibronectin type-II domains span residues 228 to 276 (ADGE…FCPH), 286 to 334 (ADGQ…FCPE), and 344 to 392 (SEGA…FCPD). Cystine bridges form between C233-C259, C247-C274, C291-C317, C305-C332, C349-C375, and C363-C390. A collagenase-like 2 region spans residues 397–467 (LFLVAAHEFG…GPTPTLGPVT (71 aa)). H403 provides a ligand contact to Zn(2+). Residue E404 is part of the active site. Residues H407 and H413 each contribute to the Zn(2+) site. A required for inhibitor TIMP2 binding region spans residues 414-662 (SQDPGALMAP…GSIKSDWLGC (249 aa)). Residues 446–465 (GPSPDADTDTGTGPTPTLGP) are disordered. An intrachain disulfide couples C471 to C662. Hemopexin repeat units follow at residues 474 to 518 (DIVF…WPEL), 519 to 565 (PEKI…GLPP), 567 to 615 (VQQV…WNAI), and 616 to 662 (PDNL…WLGC). Residues D478, D523, and D571 each coordinate Ca(2+). Residue N575 is glycosylated (N-linked (GlcNAc...) asparagine). D620 is a Ca(2+) binding site. Residue N644 is glycosylated (N-linked (GlcNAc...) asparagine).

The protein belongs to the peptidase M10A family. As to quaternary structure, interacts (via the C-terminal hemopexin-like domains-containing region) with the integrin alpha-V/beta-3; the interaction promotes vascular invasion in angiogenic vessels and melamoma cells. Interacts (via the C-terminal PEX domain) with TIMP2 (via the C-terminal); the interaction inhibits the degradation activity. Interacts with GSK3B. Ca(2+) is required as a cofactor. It depends on Zn(2+) as a cofactor. Post-translationally, phosphorylation on multiple sites modulates enzymatic activity. Phosphorylated by PKC in vitro. In terms of processing, the propeptide is processed by MMP14 (MT-MMP1) and MMP16 (MT-MMP3). Autocatalytic cleavage in the C-terminal produces the anti-angiogenic peptide, PEX. This processing appears to be facilitated by binding integrinv/beta3.

It is found in the secreted. The protein resides in the extracellular space. Its subcellular location is the extracellular matrix. It localises to the membrane. The protein localises to the nucleus. It is found in the cytoplasm. The protein resides in the mitochondrion. The catalysed reaction is Cleavage of gelatin type I and collagen types IV, V, VII, X. Cleaves the collagen-like sequence Pro-Gln-Gly-|-Ile-Ala-Gly-Gln.. Functionally, ubiquitinous metalloproteinase that is involved in diverse functions such as remodeling of the vasculature, angiogenesis, tissue repair, tumor invasion, inflammation, and atherosclerotic plaque rupture. As well as degrading extracellular matrix proteins, can also act on several nonmatrix proteins such as big endothelial 1 and beta-type CGRP promoting vasoconstriction. Also cleaves KISS at a Gly-|-Leu bond. Appears to have a role in myocardial cell death pathways. Contributes to myocardial oxidative stress by regulating the activity of GSK3beta. Cleaves GSK3beta in vitro. Involved in the formation of the fibrovascular tissues. PEX, the C-terminal non-catalytic fragment of MMP2, possesses anti-angiogenic and anti-tumor properties and inhibits cell migration and cell adhesion to FGF2 and vitronectin. Ligand for integrin alpha-v/beta-3 on the surface of blood vessels. Its function is as follows. Mediates the proteolysis of CHUK/IKKA and initiates a primary innate immune response by inducing mitochondrial-nuclear stress signaling with activation of the pro-inflammatory NF-kappaB, NFAT and IRF transcriptional pathways. This chain is 72 kDa type IV collagenase (Mmp2), found in Mus musculus (Mouse).